The chain runs to 415 residues: Serine hydroxymethyltransferase (415 aa).

(6S)-5,6,7,8-tetrahydrofolate-binding positions include Leu117 and 121-123 (GHL). N6-(pyridoxal phosphate)lysine is present on Lys226. (6S)-5,6,7,8-tetrahydrofolate is bound by residues Glu241 and 349-351 (SPF).

This sequence belongs to the SHMT family. In terms of assembly, homodimer. Pyridoxal 5'-phosphate is required as a cofactor.

It localises to the cytoplasm. It carries out the reaction (6R)-5,10-methylene-5,6,7,8-tetrahydrofolate + glycine + H2O = (6S)-5,6,7,8-tetrahydrofolate + L-serine. It functions in the pathway one-carbon metabolism; tetrahydrofolate interconversion. It participates in amino-acid biosynthesis; glycine biosynthesis; glycine from L-serine: step 1/1. In terms of biological role, catalyzes the reversible interconversion of serine and glycine with tetrahydrofolate (THF) serving as the one-carbon carrier. This reaction serves as the major source of one-carbon groups required for the biosynthesis of purines, thymidylate, methionine, and other important biomolecules. Also exhibits THF-independent aldolase activity toward beta-hydroxyamino acids, producing glycine and aldehydes, via a retro-aldol mechanism. The polypeptide is Serine hydroxymethyltransferase (Geotalea uraniireducens (strain Rf4) (Geobacter uraniireducens)).